The sequence spans 65 residues: UPF0434 protein BH12860 (65 aa).

It belongs to the UPF0434 family.

The chain is UPF0434 protein BH12860 from Bartonella henselae (strain ATCC 49882 / DSM 28221 / CCUG 30454 / Houston 1) (Rochalimaea henselae).